The chain runs to 207 residues: Protein phosphatase inhibitor 2 (207 aa).

3 disordered regions span residues 1–44, 65–97, and 110–146; these read MAAS…SKKS, LMKI…ALTP, and ESLE…EMKR. Ala-2 carries the post-translational modification N-acetylalanine. Residues 12–17 are required for binding PPP1CC; the sequence is KGILKN. Positions 19 to 28 are enriched in low complexity; that stretch reads SSTTSSVVST. Residues 35–44 show a composition bias toward basic and acidic residues; it reads SVDEELSKKS. Positions 43-55 are required for binding PPP1CC; sequence KSQKWDEMSILAT. At Ser-44 the chain carries Phosphoserine; by ATM. At Thr-73 the chain carries Phosphothreonine; by GSK3. The span at 80-91 shows a compositional bias: acidic residues; sequence ADDEDALSDSET. Residues Ser-87 and Ser-89 each carry the phosphoserine modification. A phosphothreonine mark is found at Thr-92 and Thr-96. The span at 112 to 122 shows a compositional bias: basic and acidic residues; sequence LEPKYRVREQE. Phosphoserine occurs at positions 123, 124, 129, and 132. Over residues 123-132 the composition is skewed to acidic residues; that stretch reads SSGDEDSDLS. Over residues 133–145 the composition is skewed to basic and acidic residues; sequence PEEREKKRQFEMK. The segment at 149-152 is required for binding PPP1CC catalytic center, displacing metal ions and inhibition of PPP1CC catalytic activity; it reads HYNE. The tract at residues 165–207 is disordered; that stretch reads KDLNDEEEDEEMSETAAGESMNMEESSQGSATSDQLQNKSQSS. The segment covering 168-177 has biased composition (acidic residues); sequence NDEEEDEEMS. Positions 187–207 are enriched in polar residues; sequence MEESSQGSATSDQLQNKSQSS.

The protein belongs to the protein phosphatase inhibitor 2 family. As to quaternary structure, heterodimer with PP1. Post-translationally, phosphorylation on Ser-44 by ATM activates PP1 by dissociating the PP1-PPP1R2 complex. Phosphorylation on Thr-73 by GSK3 activates PP1 by dissociating the PP1-PPP1R2 complex.

Inhibitor of protein-phosphatase 1. This chain is Protein phosphatase inhibitor 2 (PPP1R2), found in Bos taurus (Bovine).